We begin with the raw amino-acid sequence, 925 residues long: Serine/threonine-protein kinase PLK4 (925 aa).

The Protein kinase domain maps to 12 to 265 (FKVGNLLGKG…LSSVLDHPFM (254 aa)). Residues 18 to 26 (LGKGSFAGV) and Lys41 contribute to the ATP site. N6-acetyllysine is present on residues Lys45 and Lys46. Asp136 serves as the catalytic Proton acceptor. Disordered regions lie at residues 262–283 (HPFM…EDSM) and 328–394 (KNSS…KTYS). Residues 330 to 341 (SSDFSSGDGSNF) are compositionally biased toward low complexity. Residues 342–353 (CTQWGNPEQEAN) show a composition bias toward polar residues. Positions 359–369 (RVIEDAEERPH) are enriched in basic and acidic residues. Positions 381 to 391 (RASPSNQSRAK) are enriched in polar residues. Phosphoserine is present on Ser400. Residues 517 to 538 (EVMPQEPGLHPHSEQSKNRSME) form a disordered region. Residues 525 to 536 (LHPHSEQSKNRS) are compositionally biased toward basic and acidic residues. The region spanning 547 to 660 (TLRSITSPLI…SRFIQLVRSK (114 aa)) is the Cryptic POLO box 1 (CPB1) domain. Positions 661–774 (TPKITYFTRY…GRKPGNTSSP (114 aa)) constitute a Cryptic POLO box 2 (CPB2) domain. The residue at position 778 (Ser778) is a Phosphoserine. Residues 841–919 (QLLKSVFVKN…LSSILLMFSN (79 aa)) form the POLO box domain.

This sequence belongs to the protein kinase superfamily. Ser/Thr protein kinase family. CDC5/Polo subfamily. Homodimer. Interacts with CEP152 (via N-terminus). Interacts with CEP78; this interaction may be important for proper PLK4 localization to the centriole and PLK4-induced overduplication of centrioles. Interacts with CEP131. Interacts simultaneously with TENT5C and CEP192. Interacts with TENT5C; this interaction leads to the TENT5C recruitment in the centrosome. Interacts with CEP85; this interaction may be important in cell migration and centriole assembly. In terms of processing, ubiquitinated; leading to its degradation by the proteasome. Deubiquitinated by USP54; leading to PLK4 stabilization. Post-translationally, tyrosine-phosphorylated by TEC. Acetylation by KAT2A and KAT2B impairs kinase activity by shifting the kinase to an inactive conformation. As to expression, expressed in tissues associated with mitotic and meiotic cell division. Highly expressed in testis.

Its subcellular location is the cytoplasm. It localises to the cytoskeleton. The protein resides in the microtubule organizing center. The protein localises to the centrosome. It is found in the centriole. Its subcellular location is the nucleus. It localises to the nucleolus. The protein resides in the cleavage furrow. The catalysed reaction is L-seryl-[protein] + ATP = O-phospho-L-seryl-[protein] + ADP + H(+). It catalyses the reaction L-threonyl-[protein] + ATP = O-phospho-L-threonyl-[protein] + ADP + H(+). Its function is as follows. Serine/threonine-protein kinase that plays a central role in centriole duplication. Able to trigger procentriole formation on the surface of the parental centriole cylinder, leading to the recruitment of centriole biogenesis proteins such as SASS6, CPAP, CCP110, CEP135 and gamma-tubulin. When overexpressed, it is able to induce centrosome amplification through the simultaneous generation of multiple procentrioles adjoining each parental centriole during S phase. Phosphorylates 'Ser-151' of FBXW5 during the G1/S transition, leading to inhibit FBXW5 ability to ubiquitinate SASS6. Its central role in centriole replication suggests a possible role in tumorigenesis, centrosome aberrations being frequently observed in tumors. Phosphorylates CDC25C and CHEK2. Also involved in deuterosome-mediated centriole amplification in multiciliated that can generate more than 100 centrioles. Also involved in trophoblast differentiation by phosphorylating HAND1, leading to disrupt the interaction between HAND1 and MDFIC and activate HAND1. Required for the recruitment of STIL to the centriole and for STIL-mediated centriole amplification. Phosphorylates CEP131 at 'Ser-78' and PCM1 at 'Ser-372' which is essential for proper organization and integrity of centriolar satellites. This Mus musculus (Mouse) protein is Serine/threonine-protein kinase PLK4.